A 768-amino-acid polypeptide reads, in one-letter code: Probable dipeptidyl peptidase 4 (768 aa).

The N-terminal stretch at methionine 1–alanine 17 is a signal peptide. Residues asparagine 38, asparagine 81, asparagine 104, asparagine 113, asparagine 221, asparagine 282, and asparagine 468 are each glycosylated (N-linked (GlcNAc...) asparagine). Serine 616 (charge relay system) is an active-site residue. A glycan (N-linked (GlcNAc...) asparagine) is linked at asparagine 668. Residues aspartate 693 and histidine 728 each act as charge relay system in the active site.

The protein belongs to the peptidase S9B family.

It localises to the secreted. It carries out the reaction Release of an N-terminal dipeptide, Xaa-Yaa-|-Zaa-, from a polypeptide, preferentially when Yaa is Pro, provided Zaa is neither Pro nor hydroxyproline.. Functionally, extracellular dipeptidyl-peptidase which removes N-terminal dipeptides sequentially from polypeptides having unsubstituted N-termini provided that the penultimate residue is proline. The chain is Probable dipeptidyl peptidase 4 (dpp4) from Aspergillus clavatus (strain ATCC 1007 / CBS 513.65 / DSM 816 / NCTC 3887 / NRRL 1 / QM 1276 / 107).